A 260-amino-acid polypeptide reads, in one-letter code: MVLKELRQKRPLVHNITNYVVAQFVANGLLALGASPLMSDAIDEMQDLAKISDALAINIGTLNERTILCAKEAIKHYKALNKPIVLDPVGCSASALRHDTSLELLESEGISALRGNAAELGSLVGISCESKGLDSHDATTPVEIIKRAAQKYSVIAVMTGKTDYVSDGKKVLSITGGSEYLALITGAGCLHAAACASFLGLKKDPLDSMVQLCALYKQAAFSAQKKVLENNGSNGSFLFYFLDALSLPIKLENSLIKEEW.

Methionine 38 contacts substrate. 2 residues coordinate ATP: arginine 114 and threonine 159. Glycine 186 lines the substrate pocket.

This sequence belongs to the Thz kinase family. Mg(2+) is required as a cofactor.

It catalyses the reaction 5-(2-hydroxyethyl)-4-methylthiazole + ATP = 4-methyl-5-(2-phosphooxyethyl)-thiazole + ADP + H(+). Its pathway is cofactor biosynthesis; thiamine diphosphate biosynthesis; 4-methyl-5-(2-phosphoethyl)-thiazole from 5-(2-hydroxyethyl)-4-methylthiazole: step 1/1. In terms of biological role, catalyzes the phosphorylation of the hydroxyl group of 4-methyl-5-beta-hydroxyethylthiazole (THZ). This Helicobacter pylori (strain G27) protein is Hydroxyethylthiazole kinase.